Consider the following 262-residue polypeptide: Membrane protein US15 (262 aa).

7 consecutive transmembrane segments (helical) span residues 46–66 (GAVGWQLAGLTALLSAFCYAA), 77–97 (CLTESSPSLVFVIPVTSVIFI), 108–128 (IGVLLFYTLLHVPPLIVICLC), 133–153 (LVISAALFTLLAFLSCTGVAL), 163–183 (QIVVIHALITLTFTAIVVVIL), 186–206 (GWSWCFKIVLSFSVLITCLAV), and 226–246 (LLAAVKVFLSLVFTLLMVLRI).

Belongs to the HHV-5 US12 protein family.

The protein localises to the host membrane. The chain is Membrane protein US15 (US15) from Human cytomegalovirus (strain Merlin) (HHV-5).